A 312-amino-acid chain; its full sequence is GTP cyclohydrolase MptA (312 aa).

The protein belongs to the GTP cyclohydrolase IV family. Homodimer. Requires Fe(2+) as cofactor.

The enzyme catalyses GTP + H2O = 7,8-dihydroneopterin 2',3'-cyclic phosphate + formate + diphosphate + H(+). Its pathway is cofactor biosynthesis; 5,6,7,8-tetrahydromethanopterin biosynthesis. Functionally, converts GTP to 7,8-dihydro-D-neopterin 2',3'-cyclic phosphate, the first intermediate in the biosynthesis of coenzyme methanopterin. In Methanococcus vannielii (strain ATCC 35089 / DSM 1224 / JCM 13029 / OCM 148 / SB), this protein is GTP cyclohydrolase MptA.